The sequence spans 446 residues: MTMFENVTRALARQLNPRGDLTPLDSLIDFKRFHPFCLVLRKRKSTLFWGARYVHTDYTLLDVLEPGSSPSDPTDSGNFSFKNMLDARVEGDVDVPKTVKVKGTAGLSRSSTLEVQTLSVAPTALENLHKERKLSADHPFLKEMRERGENLYVVMEVVETLQEVTLERAGKAEGCFSLPFFAPLGLQGSVNHKEAVTIPKGCVLAYRVRQLMVNGKDEWGIPHICNDSMQTFPPGEKPGEGKFILIQASDVGEMHEDFKTLKEEVQRETQEVEKLSPVGRSSLLTSLSHLLGKKKELQDLEQTLEGALDKGHEVTLEALPKDVLLSKDAMDAILYFLGALTVLSEAQQKLLVKSLEKKILPVQLKLVESTMEKNFLQDKEGVFPLQPDLLSSLGEEELILTEALVGLSGLEVQRSGPQYTWDPDTLPHLCALYAGLSLLQLLSKNS.

The segment at 1–252 (MTMFENVTRA…FILIQASDVG (252 aa)) is triggers pyroptosis. Residue 9–13 (RALAR) coordinates a cardiolipin. A run of 4 beta stranded transmembrane segments spans residues 78-95 (NFSF…DVDV), 99-120 (VKVK…TLSV), 164-180 (VTLE…SLPF), and 184-198 (LGLQ…AVTI).

This sequence belongs to the gasdermin family. As to quaternary structure, homooligomer; homooligomeric ring-shaped pore complex containing 18-36 subunits when inserted in the membrane. Post-translationally, cleavage by bacterial SpeB relieves autoinhibition by releasing the N-terminal moiety (Gasdermin-A, N-terminal) that initiates pyroptosis. Palmitoylated. Expressed predominantly in the gastrointestinal (GI) tract and in the skin at a lower level. In the GI tract, the expression is highly restricted to the esophagus and forestomach.

The protein resides in the cytoplasm. Its subcellular location is the perinuclear region. It localises to the cytosol. The protein localises to the cell membrane. Its activity is regulated as follows. The full-length protein before cleavage is inactive: intramolecular interactions between N- and C-terminal domains mediate autoinhibition in the absence of activation signal. The intrinsic pyroptosis-inducing activity is carried by the released N-terminal moiety (Gasdermin-A, N-terminal) following cleavage by bacterial effector protein SpeB. Functionally, this form constitutes the precursor of the pore-forming protein and acts as a sensor of bacterial infection: upon infection, specifically cleaved by bacterial effector protein SpeB in epithelial cells, releasing the N-terminal moiety (Gasdermin-A, N-terminal) that binds to membranes and forms pores, triggering pyroptosis. In terms of biological role, pore-forming protein that causes membrane permeabilization and pyroptosis. Released upon cleavage by bacterial effector protein SpeB, and binds to membrane inner leaflet lipids. Homooligomerizes within the membrane and forms pores of 10-15 nanometers (nm) of inner diameter, triggering pyroptosis. Pyroptosis triggers the elimination of the infected skin cell, depriving the pathogen of its protective niche, while inducing an inflammatory response. This ultimately prevents bacterial penetration of the epithelial barrier and a subsequent systemic dissemination of the pathogen. Binds to cardiolipin and other acidic phospholipids, such as phosphatidylserine, which mediate its targeting to the inner leaflet membrane. This is Gasdermin-A (Gsdma) from Mus musculus (Mouse).